The primary structure comprises 435 residues: GTPase Der (435 aa).

EngA-type G domains are found at residues 4–167 (PVVA…PAEK) and 175–350 (ISFS…DNQN). Residues 10–17 (GQPNVGKS), 57–61 (DTGGI), 119–122 (NKAD), 181–188 (GRPNVGKS), 228–232 (DTAGI), and 293–296 (NKWD) each bind GTP. In terms of domain architecture, KH-like spans 351–435 (QRIQSSVLND…PIKILPRKRK (85 aa)).

This sequence belongs to the TRAFAC class TrmE-Era-EngA-EngB-Septin-like GTPase superfamily. EngA (Der) GTPase family. As to quaternary structure, associates with the 50S ribosomal subunit.

GTPase that plays an essential role in the late steps of ribosome biogenesis. This chain is GTPase Der, found in Lactobacillus helveticus (strain DPC 4571).